Here is a 211-residue protein sequence, read N- to C-terminus: Peptidyl-tRNA hydrolase (211 aa).

TRNA is bound at residue Tyr-17. His-22 serves as the catalytic Proton acceptor. Residues Phe-79, Asn-81, and Asn-127 each contribute to the tRNA site.

The protein belongs to the PTH family. In terms of assembly, monomer.

It is found in the cytoplasm. The catalysed reaction is an N-acyl-L-alpha-aminoacyl-tRNA + H2O = an N-acyl-L-amino acid + a tRNA + H(+). Functionally, hydrolyzes ribosome-free peptidyl-tRNAs (with 1 or more amino acids incorporated), which drop off the ribosome during protein synthesis, or as a result of ribosome stalling. In terms of biological role, catalyzes the release of premature peptidyl moieties from peptidyl-tRNA molecules trapped in stalled 50S ribosomal subunits, and thus maintains levels of free tRNAs and 50S ribosomes. The polypeptide is Peptidyl-tRNA hydrolase (Solidesulfovibrio magneticus (strain ATCC 700980 / DSM 13731 / RS-1) (Desulfovibrio magneticus)).